Reading from the N-terminus, the 320-residue chain is Cytochrome f (320 aa).

A signal peptide spans 1–35 (MNFFTHKKNNFGSFVTIFSFLVALGVTNLTPAAEA). Heme-binding residues include Y36, C56, C59, and H60. A helical membrane pass occupies residues 286 to 306 (IQGLLVFFATVLFAQVLLVLK).

The protein belongs to the cytochrome f family. In terms of assembly, the 4 large subunits of the cytochrome b6-f complex are cytochrome b6, subunit IV (17 kDa polypeptide, petD), cytochrome f and the Rieske protein, while the 4 small subunits are PetG, PetL, PetM and PetN. The complex functions as a dimer. It depends on heme as a cofactor.

The protein resides in the plastid. The protein localises to the chloroplast thylakoid membrane. Functionally, component of the cytochrome b6-f complex, which mediates electron transfer between photosystem II (PSII) and photosystem I (PSI), cyclic electron flow around PSI, and state transitions. This chain is Cytochrome f, found in Tetradesmus obliquus (Green alga).